We begin with the raw amino-acid sequence, 190 residues long: Putative resolvase R80 (190 aa).

Positions 11-30 (SSVLGVHQRTLYQWDKKGWI) form a DNA-binding region, H-T-H motif. Residues 61 to 190 (LSICYVRVSS…RNGSRKYSNK (130 aa)) form the Resolvase/invertase-type recombinase catalytic domain. Residues 67–92 (RVSSNSQKDDLERQIKFMKKKYPNHT) are a coiled coil. Serine 69 (O-(5'-phospho-DNA)-serine intermediate) is an active-site residue.

It belongs to the site-specific recombinase resolvase family.

In terms of biological role, resolvase catalyzes the resolution (a site-specific recombination) of the cointegrated replicon to yield the final transposition products. This Acanthamoeba polyphaga mimivirus (APMV) protein is Putative resolvase R80.